Reading from the N-terminus, the 187-residue chain is Ribosome-recycling factor (187 aa).

It belongs to the RRF family.

It is found in the cytoplasm. Responsible for the release of ribosomes from messenger RNA at the termination of protein biosynthesis. May increase the efficiency of translation by recycling ribosomes from one round of translation to another. In Paracoccus denitrificans (strain Pd 1222), this protein is Ribosome-recycling factor.